The primary structure comprises 420 residues: Diphosphomevalonate decarboxylase 2 (420 aa).

25–28 (YWGK) is a binding site for (R)-5-diphosphomevalonate. A Peroxisomal targeting signal PTS2 motif is present at residues 42–50 (SVTLDPDHL). Residues Arg-80, 163-168 (SGSACR), and Thr-219 contribute to the (R)-5-diphosphomevalonate site.

This sequence belongs to the diphosphomevalonate decarboxylase family. Homodimer.

The protein resides in the peroxisome. The enzyme catalyses (R)-5-diphosphomevalonate + ATP = isopentenyl diphosphate + ADP + phosphate + CO2. The protein operates within isoprenoid biosynthesis; isopentenyl diphosphate biosynthesis via mevalonate pathway; isopentenyl diphosphate from (R)-mevalonate: step 3/3. In terms of biological role, performs the first committed step in the biosynthesis of isoprene-containing compounds such as sterols and terpenoids. Component of the triterpenes (e.g. ginsenosides or panaxosides) and phytosterols biosynthetic pathways. Promotes the accumulation of stigmasterol and beta-sitosterol. This Panax ginseng (Korean ginseng) protein is Diphosphomevalonate decarboxylase 2.